The following is a 379-amino-acid chain: Queuine tRNA-ribosyltransferase (379 aa).

Asp94 functions as the Proton acceptor in the catalytic mechanism. Residues 94–98 (DSGGF), Asp148, Gln191, and Gly218 each bind substrate. Residues 249–255 (GVGSPDA) are RNA binding. Catalysis depends on Asp268, which acts as the Nucleophile. The segment at 273-277 (TRIAR) is RNA binding; important for wobble base 34 recognition. Cys306, Cys308, Cys311, and His337 together coordinate Zn(2+).

This sequence belongs to the queuine tRNA-ribosyltransferase family. As to quaternary structure, homodimer. Within each dimer, one monomer is responsible for RNA recognition and catalysis, while the other monomer binds to the replacement base PreQ1. Zn(2+) serves as cofactor.

It carries out the reaction 7-aminomethyl-7-carbaguanine + guanosine(34) in tRNA = 7-aminomethyl-7-carbaguanosine(34) in tRNA + guanine. It participates in tRNA modification; tRNA-queuosine biosynthesis. Catalyzes the base-exchange of a guanine (G) residue with the queuine precursor 7-aminomethyl-7-deazaguanine (PreQ1) at position 34 (anticodon wobble position) in tRNAs with GU(N) anticodons (tRNA-Asp, -Asn, -His and -Tyr). Catalysis occurs through a double-displacement mechanism. The nucleophile active site attacks the C1' of nucleotide 34 to detach the guanine base from the RNA, forming a covalent enzyme-RNA intermediate. The proton acceptor active site deprotonates the incoming PreQ1, allowing a nucleophilic attack on the C1' of the ribose to form the product. After dissociation, two additional enzymatic reactions on the tRNA convert PreQ1 to queuine (Q), resulting in the hypermodified nucleoside queuosine (7-(((4,5-cis-dihydroxy-2-cyclopenten-1-yl)amino)methyl)-7-deazaguanosine). The polypeptide is Queuine tRNA-ribosyltransferase (Staphylococcus aureus (strain Mu3 / ATCC 700698)).